The sequence spans 878 residues: Alanine--tRNA ligase (878 aa).

Positions 564, 568, 666, and 670 each coordinate Zn(2+).

Belongs to the class-II aminoacyl-tRNA synthetase family. Homotetramer. Requires Zn(2+) as cofactor.

It is found in the cytoplasm. It catalyses the reaction tRNA(Ala) + L-alanine + ATP = L-alanyl-tRNA(Ala) + AMP + diphosphate. Functionally, catalyzes the attachment of alanine to tRNA(Ala) in a two-step reaction: alanine is first activated by ATP to form Ala-AMP and then transferred to the acceptor end of tRNA(Ala). Also edits incorrectly charged Ser-tRNA(Ala) and Gly-tRNA(Ala) via its editing domain. The sequence is that of Alanine--tRNA ligase from Buchnera aphidicola subsp. Acyrthosiphon pisum (strain APS) (Acyrthosiphon pisum symbiotic bacterium).